Here is a 639-residue protein sequence, read N- to C-terminus: Chaperone protein HtpG (639 aa).

Residues 1–347 are a; substrate-binding; it reads MSHQETHGFQ…SNDLPLNVSR (347 aa). The b stretch occupies residues 348–564; it reads EILQDNKITT…AGEMSSQMIK (217 aa). Positions 565 to 639 are c; sequence LMQAAGQAVT…MNKMLLASVK (75 aa).

It belongs to the heat shock protein 90 family. Homodimer.

The protein resides in the cytoplasm. In terms of biological role, molecular chaperone. Has ATPase activity. The chain is Chaperone protein HtpG from Shewanella loihica (strain ATCC BAA-1088 / PV-4).